Reading from the N-terminus, the 382-residue chain is Telomere-binding protein OPG082 (382 aa).

The protein belongs to the orthopoxvirus OPG082 family.

It is found in the virion. In terms of biological role, binds to the hairpin form of the viral telomeric sequence. Might direct genome encapsidation into the virus particle. This chain is Telomere-binding protein OPG082 (OPG082), found in Homo sapiens (Human).